The sequence spans 409 residues: Tryptophan synthase beta chain (409 aa).

Position 95 is an N6-(pyridoxal phosphate)lysine (K95).

Belongs to the TrpB family. Tetramer of two alpha and two beta chains. Pyridoxal 5'-phosphate serves as cofactor.

It carries out the reaction (1S,2R)-1-C-(indol-3-yl)glycerol 3-phosphate + L-serine = D-glyceraldehyde 3-phosphate + L-tryptophan + H2O. The protein operates within amino-acid biosynthesis; L-tryptophan biosynthesis; L-tryptophan from chorismate: step 5/5. Functionally, the beta subunit is responsible for the synthesis of L-tryptophan from indole and L-serine. This Pseudomonas syringae pv. tomato (strain ATCC BAA-871 / DC3000) protein is Tryptophan synthase beta chain.